Consider the following 305-residue polypeptide: UDP-3-O-acyl-N-acetylglucosamine deacetylase (305 aa).

Zn(2+) contacts are provided by H78, H237, and D241. H264 serves as the catalytic Proton donor.

The protein belongs to the LpxC family. It depends on Zn(2+) as a cofactor.

The catalysed reaction is a UDP-3-O-[(3R)-3-hydroxyacyl]-N-acetyl-alpha-D-glucosamine + H2O = a UDP-3-O-[(3R)-3-hydroxyacyl]-alpha-D-glucosamine + acetate. It functions in the pathway glycolipid biosynthesis; lipid IV(A) biosynthesis; lipid IV(A) from (3R)-3-hydroxytetradecanoyl-[acyl-carrier-protein] and UDP-N-acetyl-alpha-D-glucosamine: step 2/6. Catalyzes the hydrolysis of UDP-3-O-myristoyl-N-acetylglucosamine to form UDP-3-O-myristoylglucosamine and acetate, the committed step in lipid A biosynthesis. In Burkholderia cenocepacia (strain ATCC BAA-245 / DSM 16553 / LMG 16656 / NCTC 13227 / J2315 / CF5610) (Burkholderia cepacia (strain J2315)), this protein is UDP-3-O-acyl-N-acetylglucosamine deacetylase.